The chain runs to 1477 residues: Lysine-specific demethylase rbr-2 (1477 aa).

A disordered region spans residues 1 to 37 (MRARRQENSISTPSAPSTSTSPRKKASIGNSRSKNHG). Over residues 9–21 (SISTPSAPSTSTS) the composition is skewed to low complexity. A JmjN domain is found at 56–97 (APIYYPTEEEFSDPIEYVAKIRHEAEKFGVVKIVPPANFKPP). An ARID domain is found at 121–218 (VKEKHTFIDR…HIEPFNRNLK (98 aa)). Residues 222–314 (MKNDDESDDE…KAEGDDDDDE (93 aa)) form a disordered region. The segment covering 246–259 (MRTEIEVPNDKTTE) has biased composition (basic and acidic residues). 2 stretches are compositionally biased toward basic residues: residues 272–283 (GRRRSKNKKASS) and 295–304 (NSTRGRKNKK). The PHD-type 1 zinc-finger motif lies at 319 to 371 (QVFCVACNEGKDEDLLLLCDIDGCNNGRHTYCCDPVLDEVPEGEWRCPKCIES). One can recognise a JmjC domain in the interval 468–634 (QYASHAWNLN…KGRECVESYS (167 aa)). The Fe cation site is built by His-514, Asp-517, and His-602. A coiled-coil region spans residues 874–926 (IIDKLEKWMEQVEMWRNRAKDAIYREQEYSKEEIEKIIEEGDEYDIKLEEIDE). The PHD-type 2 zinc-finger motif lies at 1203–1257 (LEACSCLGFNKSDDSESTLTCIMCDSEFHVRCCEWSPFLEKLPEGCFLCVRCLRG). The tract at residues 1375 to 1404 (TAKRKRPSVSHKETSKKSRKRQSQASPSEY) is disordered. A PHD-type 3 zinc finger spans residues 1411-1466 (FKSCQARACLKPYGDSVNWVMCEAGCKNWFHVICLGFTLREINDMHEYRCSSCLDH).

Belongs to the JARID1 histone demethylase family. The cofactor is Fe(2+).

The protein localises to the nucleus. It catalyses the reaction N(6),N(6),N(6)-trimethyl-L-lysyl(4)-[histone H3] + 3 2-oxoglutarate + 3 O2 = L-lysyl(4)-[histone H3] + 3 formaldehyde + 3 succinate + 3 CO2. Functionally, histone demethylase that specifically demethylates 'Lys-4' of histone H3, thereby playing a central role in histone code. Does not demethylate histone H3 'Lys-9', H3 'Lys-27', H3 'Lys-36', H3 'Lys-79' or H4 'Lys-20'. Demethylates trimethylated and dimethylated but not monomethylated H3 'Lys-4'. Required for normal longevity of the soma in a germline-dependent manner. Implicated in the epigenetic inheritance of lifespan over several generations. Involved in larval development and vulva formation. The sequence is that of Lysine-specific demethylase rbr-2 (rbr-2) from Caenorhabditis elegans.